We begin with the raw amino-acid sequence, 619 residues long: Type VI secretion system component TssF1 (619 aa).

In terms of assembly, interacts with TssA1.

Its function is as follows. Core component of the H1 type VI (H1-T6SS) secretion system that plays a role in the release of toxins targeting both eukaryotic and prokaryotic species. The protein is Type VI secretion system component TssF1 of Pseudomonas aeruginosa (strain ATCC 15692 / DSM 22644 / CIP 104116 / JCM 14847 / LMG 12228 / 1C / PRS 101 / PAO1).